The following is a 297-amino-acid chain: Homoserine kinase (297 aa).

82–92 is a binding site for ATP; the sequence is PVSRGLGSSAA.

It belongs to the GHMP kinase family. Homoserine kinase subfamily.

The protein resides in the cytoplasm. It carries out the reaction L-homoserine + ATP = O-phospho-L-homoserine + ADP + H(+). The protein operates within amino-acid biosynthesis; L-threonine biosynthesis; L-threonine from L-aspartate: step 4/5. In terms of biological role, catalyzes the ATP-dependent phosphorylation of L-homoserine to L-homoserine phosphate. The polypeptide is Homoserine kinase (Clostridium botulinum (strain Langeland / NCTC 10281 / Type F)).